The primary structure comprises 476 residues: Proline dehydrogenase 2, mitochondrial (476 aa).

The transit peptide at 1–29 (MANRFLRPNLIHRFSTVSPVGPPTTIIPE) directs the protein to the mitochondrion.

Belongs to the proline oxidase family. FAD serves as cofactor. Expressed in the vascular tissue and in the abscission zone of petals, sepals, stamina, pistils and siliques. Not detected in petioles.

Its subcellular location is the mitochondrion. The enzyme catalyses L-proline + a quinone = (S)-1-pyrroline-5-carboxylate + a quinol + H(+). Its pathway is amino-acid degradation; L-proline degradation into L-glutamate; L-glutamate from L-proline: step 1/2. Its function is as follows. Converts proline to delta-1-pyrroline-5-carboxylate. The protein is Proline dehydrogenase 2, mitochondrial (POX2) of Arabidopsis thaliana (Mouse-ear cress).